The following is a 199-amino-acid chain: Protein GrpE (199 aa).

This sequence belongs to the GrpE family. Homodimer.

It localises to the cytoplasm. Its function is as follows. Participates actively in the response to hyperosmotic and heat shock by preventing the aggregation of stress-denatured proteins, in association with DnaK and GrpE. It is the nucleotide exchange factor for DnaK and may function as a thermosensor. Unfolded proteins bind initially to DnaJ; upon interaction with the DnaJ-bound protein, DnaK hydrolyzes its bound ATP, resulting in the formation of a stable complex. GrpE releases ADP from DnaK; ATP binding to DnaK triggers the release of the substrate protein, thus completing the reaction cycle. Several rounds of ATP-dependent interactions between DnaJ, DnaK and GrpE are required for fully efficient folding. The polypeptide is Protein GrpE (Fusobacterium nucleatum subsp. nucleatum (strain ATCC 25586 / DSM 15643 / BCRC 10681 / CIP 101130 / JCM 8532 / KCTC 2640 / LMG 13131 / VPI 4355)).